Consider the following 209-residue polypeptide: Uracil phosphoribosyltransferase (209 aa).

Residues Arg79, Arg104, and 131 to 139 (DPMLATGGS) contribute to the 5-phospho-alpha-D-ribose 1-diphosphate site. Residues Ile194 and 199 to 201 (GDA) each bind uracil. Asp200 lines the 5-phospho-alpha-D-ribose 1-diphosphate pocket.

This sequence belongs to the UPRTase family. Requires Mg(2+) as cofactor.

It catalyses the reaction UMP + diphosphate = 5-phospho-alpha-D-ribose 1-diphosphate + uracil. Its pathway is pyrimidine metabolism; UMP biosynthesis via salvage pathway; UMP from uracil: step 1/1. With respect to regulation, allosterically activated by GTP. Catalyzes the conversion of uracil and 5-phospho-alpha-D-ribose 1-diphosphate (PRPP) to UMP and diphosphate. The sequence is that of Uracil phosphoribosyltransferase from Shouchella clausii (strain KSM-K16) (Alkalihalobacillus clausii).